The following is a 122-amino-acid chain: MIQVQTELLVADNTGAKRIECIKVLGGSKRRYASIGDTIVIAVKEALPKGKVKKGSVHKAVVVRVKKGIHREDGSKVRFDNNAAVLVDDKGEPVGTRIFGPVTRELRSRGQMKIISLAPEVL.

This sequence belongs to the universal ribosomal protein uL14 family. Part of the 50S ribosomal subunit. Forms a cluster with proteins L3 and L19. In the 70S ribosome, L14 and L19 interact and together make contacts with the 16S rRNA in bridges B5 and B8.

In terms of biological role, binds to 23S rRNA. Forms part of two intersubunit bridges in the 70S ribosome. This chain is Large ribosomal subunit protein uL14, found in Pelagibacter ubique (strain HTCC1062).